We begin with the raw amino-acid sequence, 156 residues long: Cell division protein SepF (156 aa).

It belongs to the SepF family. As to quaternary structure, homodimer. Interacts with FtsZ.

The protein resides in the cytoplasm. Cell division protein that is part of the divisome complex and is recruited early to the Z-ring. Probably stimulates Z-ring formation, perhaps through the cross-linking of FtsZ protofilaments. Its function overlaps with FtsA. The polypeptide is Cell division protein SepF (Bacillus cytotoxicus (strain DSM 22905 / CIP 110041 / 391-98 / NVH 391-98)).